Reading from the N-terminus, the 311-residue chain is Ciliary microtubule inner protein 2B (311 aa).

Disordered stretches follow at residues 64 to 93 and 150 to 183; these read PFPP…LGDP and QEGR…APFM.

The protein belongs to the CIMIP2 family. In terms of tissue distribution, expressed in airway epithelial cells.

The protein resides in the cytoplasm. The protein localises to the cytoskeleton. Its subcellular location is the cilium axoneme. Functionally, microtubule inner protein (MIP) part of the dynein-decorated doublet microtubules (DMTs) in cilia axoneme, which is required for motile cilia beating. The sequence is that of Ciliary microtubule inner protein 2B (cimip2b) from Xenopus laevis (African clawed frog).